The chain runs to 156 residues: Ribosomal RNA large subunit methyltransferase H (156 aa).

S-adenosyl-L-methionine is bound by residues Leu74, Gly105, and 124 to 129 (LSKLTL).

This sequence belongs to the RNA methyltransferase RlmH family. As to quaternary structure, homodimer.

The protein localises to the cytoplasm. The catalysed reaction is pseudouridine(1915) in 23S rRNA + S-adenosyl-L-methionine = N(3)-methylpseudouridine(1915) in 23S rRNA + S-adenosyl-L-homocysteine + H(+). Functionally, specifically methylates the pseudouridine at position 1915 (m3Psi1915) in 23S rRNA. This is Ribosomal RNA large subunit methyltransferase H from Legionella pneumophila (strain Lens).